The primary structure comprises 270 residues: Acyl-[acyl-carrier-protein]--UDP-N-acetylglucosamine O-acyltransferase (270 aa).

Belongs to the transferase hexapeptide repeat family. LpxA subfamily. As to quaternary structure, homotrimer.

It is found in the cytoplasm. The catalysed reaction is a (3R)-hydroxyacyl-[ACP] + UDP-N-acetyl-alpha-D-glucosamine = a UDP-3-O-[(3R)-3-hydroxyacyl]-N-acetyl-alpha-D-glucosamine + holo-[ACP]. The protein operates within glycolipid biosynthesis; lipid IV(A) biosynthesis; lipid IV(A) from (3R)-3-hydroxytetradecanoyl-[acyl-carrier-protein] and UDP-N-acetyl-alpha-D-glucosamine: step 1/6. Functionally, involved in the biosynthesis of lipid A, a phosphorylated glycolipid that anchors the lipopolysaccharide to the outer membrane of the cell. The chain is Acyl-[acyl-carrier-protein]--UDP-N-acetylglucosamine O-acyltransferase from Helicobacter pylori (strain HPAG1).